A 372-amino-acid chain; its full sequence is Citrate/2-methylcitrate synthase (372 aa).

His-188 lines the substrate pocket. The active site involves His-223. Residue 256 to 260 coordinates CoA; sequence KIMGF. Residue His-262 is part of the active site. Substrate is bound at residue Arg-272. Residue Asp-314 is part of the active site. Arg-339 and Arg-358 together coordinate substrate.

The protein belongs to the citrate synthase family.

The enzyme catalyses propanoyl-CoA + oxaloacetate + H2O = 2-methylcitrate + CoA + H(+). It carries out the reaction oxaloacetate + acetyl-CoA + H2O = citrate + CoA + H(+). It participates in carbohydrate metabolism; tricarboxylic acid cycle; isocitrate from oxaloacetate: step 1/2. Functionally, involved in both the tricarboxylic acid (TCA) and methylcitric acid cycles. Has both 2-methylcitrate synthase and citrate synthase activities. Catalyzes the condensation of propionyl-CoA and oxaloacetate to yield 2-methylcitrate (2-MC) and CoA, and the condensation of acetyl-CoA and oxaloacetate to yield citrate and CoA. Has 2.3-fold higher activity as a 2-methylcitrate synthase. Catalyzes the formation of either (2S,3R)- or (2R,3S)-2-methylcitrate. This is Citrate/2-methylcitrate synthase from Bacillus subtilis (strain 168).